The following is a 350-amino-acid chain: L-threonine 3-dehydrogenase (350 aa).

Zn(2+) is bound at residue C42. Residues T44 and H47 each act as charge relay system in the active site. H67, E68, C97, C100, C103, and C111 together coordinate Zn(2+). NAD(+) contacts are provided by residues L179, E199, R204, 266-268 (LGL), and 291-292 (IT).

The protein belongs to the zinc-containing alcohol dehydrogenase family. Homotetramer. It depends on Zn(2+) as a cofactor.

Its subcellular location is the cytoplasm. The catalysed reaction is L-threonine + NAD(+) = (2S)-2-amino-3-oxobutanoate + NADH + H(+). Its pathway is amino-acid degradation; L-threonine degradation via oxydo-reductase pathway; glycine from L-threonine: step 1/2. In terms of biological role, catalyzes the NAD(+)-dependent oxidation of L-threonine to 2-amino-3-ketobutyrate. To a lesser extent, also catalyzes the oxidation of L-serine. The protein is L-threonine 3-dehydrogenase of Thermococcus kodakarensis (strain ATCC BAA-918 / JCM 12380 / KOD1) (Pyrococcus kodakaraensis (strain KOD1)).